Consider the following 134-residue polypeptide: Cell division protein SepF 1 (134 aa).

Belongs to the SepF family. In terms of assembly, homodimer. Interacts with FtsZ.

The protein resides in the cytoplasm. In terms of biological role, cell division protein that is part of the divisome complex and is recruited early to the Z-ring. Probably stimulates Z-ring formation, perhaps through the cross-linking of FtsZ protofilaments. Its function overlaps with FtsA. The protein is Cell division protein SepF 1 of Streptomyces avermitilis (strain ATCC 31267 / DSM 46492 / JCM 5070 / NBRC 14893 / NCIMB 12804 / NRRL 8165 / MA-4680).